A 918-amino-acid chain; its full sequence is Isoleucine--tRNA ligase (918 aa).

The short motif at Pro59–His69 is the 'HIGH' region element. Residue Glu570 coordinates L-isoleucyl-5'-AMP. The 'KMSKS' region signature appears at Lys611–Ser615. Residue Lys614 coordinates ATP. Residues Cys893, Cys896, Cys908, and Cys911 each coordinate Zn(2+).

This sequence belongs to the class-I aminoacyl-tRNA synthetase family. IleS type 1 subfamily. As to quaternary structure, monomer. Requires Zn(2+) as cofactor.

It is found in the cytoplasm. It carries out the reaction tRNA(Ile) + L-isoleucine + ATP = L-isoleucyl-tRNA(Ile) + AMP + diphosphate. In terms of biological role, catalyzes the attachment of isoleucine to tRNA(Ile). As IleRS can inadvertently accommodate and process structurally similar amino acids such as valine, to avoid such errors it has two additional distinct tRNA(Ile)-dependent editing activities. One activity is designated as 'pretransfer' editing and involves the hydrolysis of activated Val-AMP. The other activity is designated 'posttransfer' editing and involves deacylation of mischarged Val-tRNA(Ile). The sequence is that of Isoleucine--tRNA ligase from Campylobacter concisus (strain 13826).